The sequence spans 443 residues: Exodeoxyribonuclease 7 large subunit (443 aa).

It belongs to the XseA family. Heterooligomer composed of large and small subunits.

The protein resides in the cytoplasm. It carries out the reaction Exonucleolytic cleavage in either 5'- to 3'- or 3'- to 5'-direction to yield nucleoside 5'-phosphates.. Functionally, bidirectionally degrades single-stranded DNA into large acid-insoluble oligonucleotides, which are then degraded further into small acid-soluble oligonucleotides. The chain is Exodeoxyribonuclease 7 large subunit from Legionella pneumophila (strain Lens).